A 325-amino-acid polypeptide reads, in one-letter code: Inactive S-adenosylmethionine decarboxylase prozyme (325 aa).

Belongs to the eukaryotic AdoMetDC family. In terms of assembly, forms a heterodimer with S-adenosylmethionine decarboxylase AdoMetDC; heterodimerization is required to activate AdoMetDC.

Its pathway is amine and polyamine biosynthesis; S-adenosylmethioninamine biosynthesis; S-adenosylmethioninamine from S-adenosyl-L-methionine: step 1/1. In terms of biological role, probably has no catalytic activity due to the loss of several residues required for processing and catalysis. Forms a complex with S-adenosylmethionine decarboxylase AdoMetDC which is essential to activate AdoMetDC. Required for the biosynthesis of the polyamine spermidine. Required for growth and survival during the bloodstream life cycle stage. The sequence is that of Inactive S-adenosylmethionine decarboxylase prozyme from Trypanosoma brucei brucei.